Here is a 360-residue protein sequence, read N- to C-terminus: Photosystem II protein D1 (360 aa).

3 consecutive transmembrane segments (helical) span residues 29-46 (YIGW…AATA), 118-133 (HFLL…QWEL), and 142-156 (WICV…SATA). Residue histidine 118 participates in chlorophyll a binding. Tyrosine 126 serves as a coordination point for pheophytin a. [CaMn4O5] cluster-binding residues include aspartate 170 and glutamate 189. The chain crosses the membrane as a helical span at residues 197–218 (FHMLGVAGVFGGSLFSAMHGSL). Histidine 198 lines the chlorophyll a pocket. A quinone is bound by residues histidine 215 and 264-265 (SF). Histidine 215 contacts Fe cation. Position 272 (histidine 272) interacts with Fe cation. A helical membrane pass occupies residues 274–288 (FLAAWPVVGIWFTAL). Residues histidine 332, glutamate 333, aspartate 342, and alanine 344 each contribute to the [CaMn4O5] cluster site. Positions 345–360 (AGEVAPVALTAPAING) are excised as a propeptide.

The protein belongs to the reaction center PufL/M/PsbA/D family. As to quaternary structure, PSII is composed of 1 copy each of membrane proteins PsbA, PsbB, PsbC, PsbD, PsbE, PsbF, PsbH, PsbI, PsbJ, PsbK, PsbL, PsbM, PsbT, PsbX, PsbY, PsbZ, Psb30/Ycf12, peripheral proteins PsbO, CyanoQ (PsbQ), PsbU, PsbV and a large number of cofactors. It forms dimeric complexes. The D1/D2 heterodimer binds P680, chlorophylls that are the primary electron donor of PSII, and subsequent electron acceptors. It shares a non-heme iron and each subunit binds pheophytin, quinone, additional chlorophylls, carotenoids and lipids. D1 provides most of the ligands for the Mn4-Ca-O5 cluster of the oxygen-evolving complex (OEC). There is also a Cl(-1) ion associated with D1 and D2, which is required for oxygen evolution. The PSII complex binds additional chlorophylls, carotenoids and specific lipids. is required as a cofactor. Post-translationally, tyr-161 forms a radical intermediate that is referred to as redox-active TyrZ, YZ or Y-Z. In terms of processing, C-terminally processed by CtpA; processing is essential to allow assembly of the oxygen-evolving complex and thus photosynthetic growth.

Its subcellular location is the cellular thylakoid membrane. The catalysed reaction is 2 a plastoquinone + 4 hnu + 2 H2O = 2 a plastoquinol + O2. Photosystem II (PSII) is a light-driven water:plastoquinone oxidoreductase that uses light energy to abstract electrons from H(2)O, generating O(2) and a proton gradient subsequently used for ATP formation. It consists of a core antenna complex that captures photons, and an electron transfer chain that converts photonic excitation into a charge separation. The D1/D2 (PsbA/PsbD) reaction center heterodimer binds P680, the primary electron donor of PSII as well as several subsequent electron acceptors. This is Photosystem II protein D1 from Microchaete diplosiphon (Fremyella diplosiphon).